The sequence spans 180 residues: Peptidyl-tRNA hydrolase (180 aa).

A tRNA-binding site is contributed by Tyr-15. His-20 serves as the catalytic Proton acceptor. Positions 67, 69, and 115 each coordinate tRNA.

Belongs to the PTH family. Monomer.

It localises to the cytoplasm. The enzyme catalyses an N-acyl-L-alpha-aminoacyl-tRNA + H2O = an N-acyl-L-amino acid + a tRNA + H(+). Its function is as follows. Hydrolyzes ribosome-free peptidyl-tRNAs (with 1 or more amino acids incorporated), which drop off the ribosome during protein synthesis, or as a result of ribosome stalling. In terms of biological role, catalyzes the release of premature peptidyl moieties from peptidyl-tRNA molecules trapped in stalled 50S ribosomal subunits, and thus maintains levels of free tRNAs and 50S ribosomes. The polypeptide is Peptidyl-tRNA hydrolase (Chlamydia pneumoniae (Chlamydophila pneumoniae)).